Consider the following 413-residue polypeptide: Tyrosine--tRNA ligase (413 aa).

Positions Pro57–His66 match the 'HIGH' region motif. Positions Lys241–Ser245 match the 'KMSKS' region motif. Lys244 serves as a coordination point for ATP. The S4 RNA-binding domain maps to Val351–Thr412.

This sequence belongs to the class-I aminoacyl-tRNA synthetase family. TyrS type 2 subfamily. As to quaternary structure, homodimer.

The protein localises to the cytoplasm. It carries out the reaction tRNA(Tyr) + L-tyrosine + ATP = L-tyrosyl-tRNA(Tyr) + AMP + diphosphate + H(+). Functionally, catalyzes the attachment of tyrosine to tRNA(Tyr) in a two-step reaction: tyrosine is first activated by ATP to form Tyr-AMP and then transferred to the acceptor end of tRNA(Tyr). This is Tyrosine--tRNA ligase from Moorella thermoacetica (strain ATCC 39073 / JCM 9320).